Here is a 321-residue protein sequence, read N- to C-terminus: Small ribosomal subunit biogenesis GTPase RsgA (321 aa).

Residues 89–248 (QSWINRPPVA…VADTPGFNRP (160 aa)) form the CP-type G domain. Residues 138 to 141 (TKRD) and 190 to 198 (GPSGVGKTS) contribute to the GTP site. Zn(2+) is bound by residues cysteine 273, cysteine 278, histidine 280, and cysteine 286.

This sequence belongs to the TRAFAC class YlqF/YawG GTPase family. RsgA subfamily. Monomer. Associates with 30S ribosomal subunit, binds 16S rRNA. Zn(2+) is required as a cofactor.

It is found in the cytoplasm. Functionally, one of several proteins that assist in the late maturation steps of the functional core of the 30S ribosomal subunit. Helps release RbfA from mature subunits. May play a role in the assembly of ribosomal proteins into the subunit. Circularly permuted GTPase that catalyzes slow GTP hydrolysis, GTPase activity is stimulated by the 30S ribosomal subunit. This chain is Small ribosomal subunit biogenesis GTPase RsgA, found in Prochlorococcus marinus (strain MIT 9303).